We begin with the raw amino-acid sequence, 193 residues long: GTP cyclohydrolase 1 (193 aa).

3 residues coordinate Zn(2+): C83, H86, and C154.

The protein belongs to the GTP cyclohydrolase I family. In terms of assembly, homomer.

It carries out the reaction GTP + H2O = 7,8-dihydroneopterin 3'-triphosphate + formate + H(+). It functions in the pathway cofactor biosynthesis; 7,8-dihydroneopterin triphosphate biosynthesis; 7,8-dihydroneopterin triphosphate from GTP: step 1/1. This is GTP cyclohydrolase 1 from Porphyromonas gingivalis (strain ATCC 33277 / DSM 20709 / CIP 103683 / JCM 12257 / NCTC 11834 / 2561).